Here is a 368-residue protein sequence, read N- to C-terminus: Ribosomal RNA large subunit methyltransferase M (368 aa).

Residues Ser-192, 225–228, Asp-244, Asp-264, and Asp-281 each bind S-adenosyl-L-methionine; that span reads APGG. The active-site Proton acceptor is Lys-310.

It belongs to the class I-like SAM-binding methyltransferase superfamily. RNA methyltransferase RlmE family. RlmM subfamily. Monomer.

The protein resides in the cytoplasm. It catalyses the reaction cytidine(2498) in 23S rRNA + S-adenosyl-L-methionine = 2'-O-methylcytidine(2498) in 23S rRNA + S-adenosyl-L-homocysteine + H(+). Functionally, catalyzes the 2'-O-methylation at nucleotide C2498 in 23S rRNA. This Colwellia psychrerythraea (strain 34H / ATCC BAA-681) (Vibrio psychroerythus) protein is Ribosomal RNA large subunit methyltransferase M.